Reading from the N-terminus, the 120-residue chain is NAD(P)H-quinone oxidoreductase subunit 3 (120 aa).

The next 3 membrane-spanning stretches (helical) occupy residues 10–30 (LLVF…ASAL), 64–84 (MFAL…PWAV), and 89–109 (LGLL…VGLV).

It belongs to the complex I subunit 3 family. As to quaternary structure, NDH-1 can be composed of about 15 different subunits; different subcomplexes with different compositions have been identified which probably have different functions.

Its subcellular location is the cellular thylakoid membrane. The enzyme catalyses a plastoquinone + NADH + (n+1) H(+)(in) = a plastoquinol + NAD(+) + n H(+)(out). The catalysed reaction is a plastoquinone + NADPH + (n+1) H(+)(in) = a plastoquinol + NADP(+) + n H(+)(out). In terms of biological role, NDH-1 shuttles electrons from an unknown electron donor, via FMN and iron-sulfur (Fe-S) centers, to quinones in the respiratory and/or the photosynthetic chain. The immediate electron acceptor for the enzyme in this species is believed to be plastoquinone. Couples the redox reaction to proton translocation, and thus conserves the redox energy in a proton gradient. Cyanobacterial NDH-1 also plays a role in inorganic carbon-concentration. In Synechococcus sp. (strain JA-2-3B'a(2-13)) (Cyanobacteria bacterium Yellowstone B-Prime), this protein is NAD(P)H-quinone oxidoreductase subunit 3.